Reading from the N-terminus, the 434-residue chain is Enolase (434 aa).

Gln165 lines the (2R)-2-phosphoglycerate pocket. The active-site Proton donor is Glu207. Residues Asp244, Glu291, and Asp318 each coordinate Mg(2+). The (2R)-2-phosphoglycerate site is built by Lys343, Arg372, Ser373, and Lys394. Lys343 serves as the catalytic Proton acceptor.

It belongs to the enolase family. Mg(2+) serves as cofactor.

The protein resides in the cytoplasm. It is found in the secreted. The protein localises to the cell surface. It carries out the reaction (2R)-2-phosphoglycerate = phosphoenolpyruvate + H2O. It participates in carbohydrate degradation; glycolysis; pyruvate from D-glyceraldehyde 3-phosphate: step 4/5. Catalyzes the reversible conversion of 2-phosphoglycerate (2-PG) into phosphoenolpyruvate (PEP). It is essential for the degradation of carbohydrates via glycolysis. The chain is Enolase from Staphylococcus aureus (strain USA300 / TCH1516).